Here is a 296-residue protein sequence, read N- to C-terminus: Putative methyltransferase HI_1523 (296 aa).

The protein belongs to the N(4)/N(6)-methyltransferase family.

This chain is Putative methyltransferase HI_1523, found in Haemophilus influenzae (strain ATCC 51907 / DSM 11121 / KW20 / Rd).